The following is a 747-amino-acid chain: MTTKKFTPTITRGPRLTPGEISLTPPDDLGIDIPPSGVQKILPYVMGGAMLGMIAIMVAGGTRQLSPYMLMMPLMMIVMMVGGLAGSTGGGGKKVPEINADRKEYLRYLAGLRTRVTSSATSQVAFFSYHAPHPEDLLSIVGTQRQWSRPANADFYAATRIGIGDQPAVDRLLKPAVGGELAAASAAPQPFLEPVSHMWVVKFLRTHGLIHDCPKLLQLRTFPTIAIGGDLAGAAGLMTAMICHLAVFHPPDLLQIRVLTEEPDDPDWSWLKWLPHVQHQTETDAAGSTRLIFTRQEGLSDLAARGPHAPDSLPGGPYVVVVDLTGGKAGFPPDGRAGVTVITLGNHRGSAYRIRVHEDGTADDRLPNQSFRQVTSVTDRMSPQQASRIARKLAGWSITGTILDKTSRVQKKVATDWHQLVGAQSVEEITPSRWRMYTDTDRDRLKIPFGHELKTGNVMYLDIKEGAEFGAGPHGMLIGTTGSGKSEFLRTLILSLVAMTHPDQVNLLLTDFKGGSTFLGMEKLPHTAAVVTNMAEEAELVSRMGEVLTGELDRRQSILRQAGMKVGAAGALSGVAEYEKYRERGADLPPLPTLFVVVDEFAELLQSHPDFIGLFDRICRVGRSLRVHLLLATQSLQTGGVRIDKLEPNLTYRIALRTTSSHESKAVIGTPEAQYITNKESGVGFLRVGMEDPVKFSTFYISGPYMPPAAGVETNGEAGGPGQQTTRQAARIHRFTAAPVLEEAPTP.

A run of 3 helical transmembrane segments spans residues 41–61 (ILPY…VAGG), 65–85 (LSPY…GGLA), and 222–242 (FPTI…TAMI). Residues 456-665 (GNVMYLDIKE…LRTTSSHESK (210 aa)) form the FtsK domain. 479 to 486 (GTTGSGKS) lines the ATP pocket.

Part of the ESX-1 / type VII secretion system (T7SS), which is composed of cytosolic and membrane components. The ESX-1 membrane complex is composed of EccB1, EccCa1, EccCb1, EccD1 and EccE1.

It localises to the cell inner membrane. Its function is as follows. Part of the ESX-1 specialized secretion system, which delivers several virulence factors to host cells during infection, including the key virulence factors EsxA (ESAT-6) and EsxB (CFP-10). The protein is ESX-1 secretion system protein EccCa1 of Mycobacterium tuberculosis (strain CDC 1551 / Oshkosh).